The sequence spans 355 residues: 3-dehydroquinate synthase (355 aa).

Residues 67–72, 101–105, 125–126, Lys-138, Lys-147, and 165–168 each bind NAD(+); these read DGEIYK, GVIGD, TT, and FLNT. 3 residues coordinate Zn(2+): Glu-180, His-243, and His-260.

It belongs to the sugar phosphate cyclases superfamily. Dehydroquinate synthase family. NAD(+) serves as cofactor. The cofactor is Co(2+). Zn(2+) is required as a cofactor.

The protein resides in the cytoplasm. It carries out the reaction 7-phospho-2-dehydro-3-deoxy-D-arabino-heptonate = 3-dehydroquinate + phosphate. It functions in the pathway metabolic intermediate biosynthesis; chorismate biosynthesis; chorismate from D-erythrose 4-phosphate and phosphoenolpyruvate: step 2/7. Functionally, catalyzes the conversion of 3-deoxy-D-arabino-heptulosonate 7-phosphate (DAHP) to dehydroquinate (DHQ). This is 3-dehydroquinate synthase from Buchnera aphidicola subsp. Baizongia pistaciae (strain Bp).